The following is a 200-amino-acid chain: Recombination protein RecR (200 aa).

The C4-type zinc-finger motif lies at 57 to 72 (CRQCRTLTEQELCPQC). In terms of domain architecture, Toprim spans 80–175 (TQLCVVEGPT…VASRIAHGVP (96 aa)).

This sequence belongs to the RecR family.

Its function is as follows. May play a role in DNA repair. It seems to be involved in an RecBC-independent recombinational process of DNA repair. It may act with RecF and RecO. This chain is Recombination protein RecR, found in Pseudomonas putida (strain ATCC 700007 / DSM 6899 / JCM 31910 / BCRC 17059 / LMG 24140 / F1).